The primary structure comprises 364 residues: Putative glutamate--cysteine ligase 2-2 (364 aa).

The protein belongs to the glutamate--cysteine ligase type 2 family. YbdK subfamily.

The enzyme catalyses L-cysteine + L-glutamate + ATP = gamma-L-glutamyl-L-cysteine + ADP + phosphate + H(+). Functionally, ATP-dependent carboxylate-amine ligase which exhibits weak glutamate--cysteine ligase activity. The chain is Putative glutamate--cysteine ligase 2-2 from Mycobacterium sp. (strain JLS).